Reading from the N-terminus, the 356-residue chain is UDP-N-acetylglucosamine--N-acetylmuramyl-(pentapeptide) pyrophosphoryl-undecaprenol N-acetylglucosamine transferase (356 aa).

UDP-N-acetyl-alpha-D-glucosamine is bound by residues Ser198 and Gln289.

The protein belongs to the glycosyltransferase 28 family. MurG subfamily.

It localises to the cell membrane. The catalysed reaction is Mur2Ac(oyl-L-Ala-gamma-D-Glu-L-Lys-D-Ala-D-Ala)-di-trans,octa-cis-undecaprenyl diphosphate + UDP-N-acetyl-alpha-D-glucosamine = beta-D-GlcNAc-(1-&gt;4)-Mur2Ac(oyl-L-Ala-gamma-D-Glu-L-Lys-D-Ala-D-Ala)-di-trans,octa-cis-undecaprenyl diphosphate + UDP + H(+). It functions in the pathway cell wall biogenesis; peptidoglycan biosynthesis. Cell wall formation. Catalyzes the transfer of a GlcNAc subunit on undecaprenyl-pyrophosphoryl-MurNAc-pentapeptide (lipid intermediate I) to form undecaprenyl-pyrophosphoryl-MurNAc-(pentapeptide)GlcNAc (lipid intermediate II). This chain is UDP-N-acetylglucosamine--N-acetylmuramyl-(pentapeptide) pyrophosphoryl-undecaprenol N-acetylglucosamine transferase, found in Streptococcus thermophilus (strain CNRZ 1066).